Reading from the N-terminus, the 721-residue chain is MTTSALTEAEAANELMRLARQIAKHNRLYHAEDSPEITDAEYDALVRRNAELEAAFPHLIRPDSPSAQIGHEIAASPLGKVQHEVRMMSLDNAFTDEEVEEFVARVRRFLALPEDAEVVMTAEDKIDGLSCSLRYENGRLVRAATRGDGQVGEDVTANVAHIPDIPQELKAAGLFDIPAVFEIRGEVYMAKDDFLALNARQAEAGEKIFANPRNGAAGSLRQKDASVTASRPLRFLAHGWGAASEVPAATQFEMMRKIADWGVPVSPLLVRCSSAAEMVAHYRDIGEKRASLPYDIDGVVYKVDRLDWQDRLGFVAKAPRWGIAHKFPAERAETTLDAIDIQVGRTGKLTPVGRLKPVLVGGVTVTNVTLHNRDEIGRLGLRVGDRIVLQRAGDVIPQVVENLTREEPRDPYHFPDHCPECGSEAVAEEGEVDVRCTGGLICPAQRVERLKHFVSRAALDIEGLGEKTIIEFFQLGWLESPADIFRLRKRRSEIVGREGWKDKSVDNLLAAIEAKRQPDAARLLFGLGIRHVGAVTARDLMKRFVTLPALREAARQASSAAREGEPANADGAYDPATVTPDSDTAGAEAGRSDALADLLSIDGVGPVVVEALGDFFHEPHNIAVWEDLLSEVSPPPYVVETKDSAVAGKTIVFTGKLETMSRDEAKAQAEALGARTAGSVSAKTDLVVAGPGAGSKLKQAAALGIDVIDEAAWAEIVRQAG.

Residues 39–43 (DAEYD), 89–90 (SL), and Glu123 contribute to the NAD(+) site. Lys125 serves as the catalytic N6-AMP-lysine intermediate. The NAD(+) site is built by Arg146, Glu186, Lys302, and Lys326. Residues Cys418, Cys421, Cys436, and Cys442 each coordinate Zn(2+). A disordered region spans residues 556–588 (QASSAAREGEPANADGAYDPATVTPDSDTAGAE). Positions 641 to 721 (TKDSAVAGKT…AWAEIVRQAG (81 aa)) constitute a BRCT domain.

The protein belongs to the NAD-dependent DNA ligase family. LigA subfamily. It depends on Mg(2+) as a cofactor. Requires Mn(2+) as cofactor.

It carries out the reaction NAD(+) + (deoxyribonucleotide)n-3'-hydroxyl + 5'-phospho-(deoxyribonucleotide)m = (deoxyribonucleotide)n+m + AMP + beta-nicotinamide D-nucleotide.. Its function is as follows. DNA ligase that catalyzes the formation of phosphodiester linkages between 5'-phosphoryl and 3'-hydroxyl groups in double-stranded DNA using NAD as a coenzyme and as the energy source for the reaction. It is essential for DNA replication and repair of damaged DNA. The sequence is that of DNA ligase from Novosphingobium aromaticivorans (strain ATCC 700278 / DSM 12444 / CCUG 56034 / CIP 105152 / NBRC 16084 / F199).